A 142-amino-acid chain; its full sequence is Hemoglobin A subunit alpha-1 (142 aa).

One can recognise a Globin domain in the interval 2–142; it reads VLTAGDKANV…VATALTSKYR (141 aa). Position 59 (His-59) interacts with O2. A heme b-binding site is contributed by His-88.

This sequence belongs to the globin family. As to quaternary structure, tetramer of alpha-1, alpha-2 and two identical beta chains. Red blood cells.

Its function is as follows. Involved in oxygen transport from the lung to the various peripheral tissues. This Aldabrachelys gigantea (Aldabra giant tortoise) protein is Hemoglobin A subunit alpha-1.